Here is a 100-residue protein sequence, read N- to C-terminus: Pregnancy-associated protein bPAP (100 aa).

The tract at residues 1 to 40 (DSELAGPRGARGPHGLSGPHGLSGLXGPXGYTGPIGMXGL) is disordered. A compositionally biased stretch (low complexity) spans 13-29 (PHGLSGPHGLSGLXGPX).

In terms of tissue distribution, detected at high levels in the urine of pregnant females (at protein level) and at far lower levels in the urine of nonpregnant females.

This Bos taurus (Bovine) protein is Pregnancy-associated protein bPAP.